Here is an 882-residue protein sequence, read N- to C-terminus: Protein translocase subunit SecA (882 aa).

ATP is bound by residues Q79, G97 to T101, and D487.

Belongs to the SecA family.

It localises to the plastid. It is found in the chloroplast stroma. Its subcellular location is the chloroplast thylakoid membrane. It catalyses the reaction ATP + H2O + cellular proteinSide 1 = ADP + phosphate + cellular proteinSide 2.. Has a central role in coupling the hydrolysis of ATP to the transfer of proteins across the thylakoid membrane. This Gracilaria tenuistipitata var. liui (Red alga) protein is Protein translocase subunit SecA.